Consider the following 184-residue polypeptide: NADH-quinone oxidoreductase subunit B 2 (184 aa).

The [4Fe-4S] cluster site is built by Cys59, Cys60, Cys125, and Cys153.

The protein belongs to the complex I 20 kDa subunit family. In terms of assembly, NDH-1 is composed of 14 different subunits. Subunits NuoB, C, D, E, F, and G constitute the peripheral sector of the complex. Requires [4Fe-4S] cluster as cofactor.

The protein localises to the cell inner membrane. The enzyme catalyses a quinone + NADH + 5 H(+)(in) = a quinol + NAD(+) + 4 H(+)(out). Its function is as follows. NDH-1 shuttles electrons from NADH, via FMN and iron-sulfur (Fe-S) centers, to quinones in the respiratory chain. Couples the redox reaction to proton translocation (for every two electrons transferred, four hydrogen ions are translocated across the cytoplasmic membrane), and thus conserves the redox energy in a proton gradient. The protein is NADH-quinone oxidoreductase subunit B 2 of Solibacter usitatus (strain Ellin6076).